A 168-amino-acid chain; its full sequence is MALLKVLRFPDERLRTQATPITEFNAELQTQIDDMFETMYQEKGIGLAATQVDYHKQLIVMDLQDEVERPKVFINPEIIASSGDFCNEEGCLSVPGIYAKVDRAEFVTVKALDRHGNEFTVEADDLFAICIQHEMDHLKGKLFVDYLSPLKRQRIKQKLEKAAKQDAK.

Fe cation-binding residues include Cys91 and His133. Glu134 is an active-site residue. His137 contacts Fe cation.

This sequence belongs to the polypeptide deformylase family. Fe(2+) is required as a cofactor.

The catalysed reaction is N-terminal N-formyl-L-methionyl-[peptide] + H2O = N-terminal L-methionyl-[peptide] + formate. Its function is as follows. Removes the formyl group from the N-terminal Met of newly synthesized proteins. Requires at least a dipeptide for an efficient rate of reaction. N-terminal L-methionine is a prerequisite for activity but the enzyme has broad specificity at other positions. The sequence is that of Peptide deformylase 1 from Shewanella oneidensis (strain ATCC 700550 / JCM 31522 / CIP 106686 / LMG 19005 / NCIMB 14063 / MR-1).